We begin with the raw amino-acid sequence, 623 residues long: Chaperone protein HtpG (623 aa).

Residues 1-330 (MIMTQEKKKF…SEDLPLNISR (330 aa)) form an a; substrate-binding region. The b stretch occupies residues 331 to 546 (ESLQHNSVLE…DAAMDIRMER (216 aa)). The interval 477–497 (SDIDVEQTTSQSEEKNTDSKK) is disordered. A compositionally biased stretch (basic and acidic residues) spans 488–497 (SEEKNTDSKK). Positions 547 to 623 (FLIEQKQIAN…LNDIVQKAIL (77 aa)) are c.

This sequence belongs to the heat shock protein 90 family. In terms of assembly, homodimer.

It is found in the cytoplasm. Molecular chaperone. Has ATPase activity. The sequence is that of Chaperone protein HtpG from Rickettsia massiliae (strain Mtu5).